Reading from the N-terminus, the 177-residue chain is Bifunctional protein PyrR (177 aa).

The PRPP-binding signature appears at 99–111 (VVLVDDVLYTGRT).

Belongs to the purine/pyrimidine phosphoribosyltransferase family. PyrR subfamily. As to quaternary structure, homodimer and homohexamer; in equilibrium.

The catalysed reaction is UMP + diphosphate = 5-phospho-alpha-D-ribose 1-diphosphate + uracil. Functionally, regulates transcriptional attenuation of the pyrimidine nucleotide (pyr) operon by binding in a uridine-dependent manner to specific sites on pyr mRNA. This disrupts an antiterminator hairpin in the RNA and favors formation of a downstream transcription terminator, leading to a reduced expression of downstream genes. Its function is as follows. Also displays a weak uracil phosphoribosyltransferase activity which is not physiologically significant. The protein is Bifunctional protein PyrR of Clostridioides difficile (strain 630) (Peptoclostridium difficile).